The primary structure comprises 439 residues: Methylenetetrahydrofolate--tRNA-(uracil-5-)-methyltransferase TrmFO (439 aa).

9–14 (GAGLAG) provides a ligand contact to FAD.

The protein belongs to the MnmG family. TrmFO subfamily. The cofactor is FAD.

It localises to the cytoplasm. It carries out the reaction uridine(54) in tRNA + (6R)-5,10-methylene-5,6,7,8-tetrahydrofolate + NADH + H(+) = 5-methyluridine(54) in tRNA + (6S)-5,6,7,8-tetrahydrofolate + NAD(+). The catalysed reaction is uridine(54) in tRNA + (6R)-5,10-methylene-5,6,7,8-tetrahydrofolate + NADPH + H(+) = 5-methyluridine(54) in tRNA + (6S)-5,6,7,8-tetrahydrofolate + NADP(+). Its function is as follows. Catalyzes the folate-dependent formation of 5-methyl-uridine at position 54 (M-5-U54) in all tRNAs. This Desulforudis audaxviator (strain MP104C) protein is Methylenetetrahydrofolate--tRNA-(uracil-5-)-methyltransferase TrmFO.